A 579-amino-acid polypeptide reads, in one-letter code: uncharacterized protein (579 aa).

3 helical membrane passes run 173–193 (IAMG…GGLA), 196–216 (FVAA…MIGA), and 218–238 (YLGT…GFGA).

This sequence belongs to the TMCO4 family.

The protein localises to the cytoplasm. It is found in the nucleus membrane. This is an uncharacterized protein from Schizosaccharomyces pombe (strain 972 / ATCC 24843) (Fission yeast).